We begin with the raw amino-acid sequence, 179 residues long: Gut granule loss protein 3 (179 aa).

Residues D40 to S59 are disordered. Residues D42–T54 are compositionally biased toward polar residues.

The chain is Gut granule loss protein 3 (glo-3) from Caenorhabditis elegans.